A 451-amino-acid chain; its full sequence is Phosphoglucosamine mutase (451 aa).

Serine 107 functions as the Phosphoserine intermediate in the catalytic mechanism. Residues serine 107, aspartate 246, aspartate 248, and aspartate 250 each coordinate Mg(2+). Phosphoserine is present on serine 107.

The protein belongs to the phosphohexose mutase family. Mg(2+) is required as a cofactor. Post-translationally, activated by phosphorylation.

The catalysed reaction is alpha-D-glucosamine 1-phosphate = D-glucosamine 6-phosphate. Its function is as follows. Catalyzes the conversion of glucosamine-6-phosphate to glucosamine-1-phosphate. The polypeptide is Phosphoglucosamine mutase (Burkholderia multivorans (strain ATCC 17616 / 249)).